Here is a 60-residue protein sequence, read N- to C-terminus: MKALCAILLVLFACSVMFEHFSISTAEKVLQNPLSELKRNCEKADCRRSLPQNKQHDFKE.

The signal sequence occupies residues 1–26; sequence MKALCAILLVLFACSVMFEHFSISTA.

The protein belongs to the non-disulfide-bridged peptide (NDBP) superfamily. Expressed by the venom gland.

The protein localises to the secreted. The chain is Venom protein 4.1 from Lychas mucronatus (Chinese swimming scorpion).